We begin with the raw amino-acid sequence, 131 residues long: Small ribosomal subunit protein bS6 (131 aa).

Residues 98 to 131 are disordered; the sequence is EASPMVKAKDERRERRDDFANETADDAEAGDSEE. Over residues 104-116 the composition is skewed to basic and acidic residues; the sequence is KAKDERRERRDDF. The segment covering 120–131 has biased composition (acidic residues); that stretch reads TADDAEAGDSEE.

It belongs to the bacterial ribosomal protein bS6 family.

Its function is as follows. Binds together with bS18 to 16S ribosomal RNA. This Salmonella dublin (strain CT_02021853) protein is Small ribosomal subunit protein bS6.